Consider the following 682-residue polypeptide: MSRKQLALFEPTLVVQALKEAVKKLNPQAQWRNPVMFIVWIGSLLTTCISIAMASGAMPGNALFSAAISGWLWITVLFANFAEALAEGRSKAQANSLKGVKKTAFARKLREPKYGAAADKVPADQLRKGDIVLVEAGDIIPCDGEVIEGGASVDESAITGESAPVIRESGGDFASVTGGTRILSDWLVIECSVNPGETFLDRMIAMVEGAQRRKTPNEIALTILLIALTIVFLLATATLWPFSAWGGNAVSVTVLVALLVCLIPTTIGGLLSAIGVAGMSRMLGANVIATSGRAVEAAGDVDVLLLDKTGTITLGNRQASEFIPAQGVDEKTLADAAQLASLADETPEGRSIVILAKQRFNLRERDVQSLHATFVPFTAQSRMSGINIDNRMIRKGSVDAIRRHVEANGGHFPTDVDQKVDQVARQGATPLVVVEGSRVLGVIALKDIVKGGIKERFAQLRKMGIKTVMITGDNRLTAAAIAAEAGVDDFLAEATPEAKLALIRQYQAEGRLVAMTGDGTNDAPALAQADVAVAMNSGTQAAKEAGNMVDLDSNPTKLIEVVHIGKQMLMTRGSLTTFSIANDVAKYFAIIPAAFAATYPQLNALNIMCLHSPDSAILSAVIFNALIIVFLIPLALKGVSYKPLTASAMLRRNLWIYGLGGLLVPFIGIKVIDLLLTVCGLV.

The next 4 membrane-spanning stretches (helical) occupy residues 34-54 (PVMF…IAMA), 62-82 (ALFS…ANFA), 219-239 (IALT…TATL), and 254-274 (VLVA…LSAI). The active-site 4-aspartylphosphate intermediate is D307. ATP is bound by residues D344, E348, 377 to 384 (FTAQSRMS), and K395. Residues D518 and D522 each contribute to the Mg(2+) site. Transmembrane regions (helical) follow at residues 588–608 (FAII…LNIM), 616–636 (AILS…PLAL), and 656–676 (IYGL…DLLL).

Belongs to the cation transport ATPase (P-type) (TC 3.A.3) family. Type IA subfamily. As to quaternary structure, the system is composed of three essential subunits: KdpA, KdpB and KdpC.

It localises to the cell inner membrane. The enzyme catalyses K(+)(out) + ATP + H2O = K(+)(in) + ADP + phosphate + H(+). Functionally, part of the high-affinity ATP-driven potassium transport (or Kdp) system, which catalyzes the hydrolysis of ATP coupled with the electrogenic transport of potassium into the cytoplasm. This subunit is responsible for energy coupling to the transport system and for the release of the potassium ions to the cytoplasm. This is Potassium-transporting ATPase ATP-binding subunit from Escherichia coli (strain K12 / MC4100 / BW2952).